A 548-amino-acid chain; its full sequence is MKKVTAMLFSMAVGLNAVSMAAKAKASEEQETDVLLIGGGIMSATLGTYLRELEPEWSMTMVERLEGVAQESSNGWNNAGTGHSALMELNYTPQNADGSISIEKAVAINEAFQISRQFWAHQVERGVLRTPRSFINTVPHMSFVWGEDNVNFLRARYAALQQSSLFRGMRYSEDHAQIKEWAPLVMEGRDPQQKVAATRTEIGTDVNYGEITRQLIASLQKKSNFSLQLSSEVRALKRNDDNTWTVTVADLKNGTAQNIRAKFVFIGAGGAALKLLQESGIPEAKDYAGFPVGGQFLVSENPDVVNHHLAKVYGKASVGAPPMSVPHIDTRVLDGKRVVLFGPFATFSTKFLKNGSLWDLMSSTTTSNVMPMMHVGLDNFDLVKYLVSQVMLSEEDRFEALKEYYPQAKKEDWRLWQAGQRVQIIKRDAEKGGVLRLGTEVVSDQQGTIAALLGASPGASTAAPIMLDLLEKVFGDRVSSPQWQAMLKAIVPSYGRKLNGDVAATERELQYTSEVLGLKYDKPQAADSTPKPQLKPKPVQKEVADIAL.

Residues 522–548 (KPQAADSTPKPQLKPKPVQKEVADIAL) are disordered. Residues 539–548 (VQKEVADIAL) are compositionally biased toward basic and acidic residues.

It belongs to the MQO family. FAD serves as cofactor.

It carries out the reaction (S)-malate + a quinone = a quinol + oxaloacetate. The protein operates within carbohydrate metabolism; tricarboxylic acid cycle; oxaloacetate from (S)-malate (quinone route): step 1/1. This chain is Probable malate:quinone oxidoreductase, found in Escherichia coli O9:H4 (strain HS).